A 66-amino-acid polypeptide reads, in one-letter code: Gallinacin-8 (66 aa).

An N-terminal signal peptide occupies residues 1–19 (MKILYLLLAVLLTVLQSSL). Positions 20-25 (GFMRVP) are excised as a propeptide. Cystine bridges form between Cys-31-Cys-60, Cys-38-Cys-54, and Cys-43-Cys-61.

It belongs to the beta-defensin family. As to expression, expressed in the liver, kidney, gall bladder, testis, ovary and male and femae reproductive tracts. Expressed in the ovarian stroma and the theca and granulosa layers of the ovarian follicle.

It localises to the secreted. The protein localises to the cytoplasmic granule. Functionally, has bactericidal activity. This Gallus gallus (Chicken) protein is Gallinacin-8 (GAL8).